Here is a 210-residue protein sequence, read N- to C-terminus: Na(+)-translocating NADH-quinone reductase subunit D (210 aa).

Helical transmembrane passes span 42–62, 72–92, 103–123, 131–151, and 178–198; these read FVMTLAVTAVTAFSNLFISLI, IIAQMAVIASLVIVVDQVLKA, VFVGLIITNCIVMGRAEAYAM, FLDGIGNGLGYGAVLLTVATV, and NGLLLLPPSAFFIIGLIIWGV.

This sequence belongs to the NqrDE/RnfAE family. As to quaternary structure, composed of six subunits; NqrA, NqrB, NqrC, NqrD, NqrE and NqrF.

The protein resides in the cell inner membrane. It carries out the reaction a ubiquinone + n Na(+)(in) + NADH + H(+) = a ubiquinol + n Na(+)(out) + NAD(+). Its function is as follows. NQR complex catalyzes the reduction of ubiquinone-1 to ubiquinol by two successive reactions, coupled with the transport of Na(+) ions from the cytoplasm to the periplasm. NqrA to NqrE are probably involved in the second step, the conversion of ubisemiquinone to ubiquinol. The protein is Na(+)-translocating NADH-quinone reductase subunit D of Aeromonas hydrophila subsp. hydrophila (strain ATCC 7966 / DSM 30187 / BCRC 13018 / CCUG 14551 / JCM 1027 / KCTC 2358 / NCIMB 9240 / NCTC 8049).